The sequence spans 374 residues: Serpin B8 (374 aa).

This sequence belongs to the serpin family. Ov-serpin subfamily.

The protein resides in the cytoplasm. Functionally, has an important role in epithelial desmosome-mediated cell-cell adhesion. The chain is Serpin B8 (SERPINB8) from Homo sapiens (Human).